A 422-amino-acid chain; its full sequence is Ena/VASP-like protein (422 aa).

Residues Phe-4–Met-118 enclose the WH1 domain. Polar residues predominate over residues Ser-120–Pro-135. Disordered regions lie at residues Ser-120–Glu-139 and Val-147–Ser-375. Position 136 is a phosphoserine (Ser-136). The span at Val-147 to Thr-163 shows a compositional bias: basic and acidic residues. Over residues Pro-175–Ser-186 the composition is skewed to low complexity. Positions Gly-187–Pro-212 are enriched in pro residues. The tract at residues Gly-228–Ser-248 is EVH2 block A. Residues Gly-228–Ile-419 are EVH2. Residues Lys-237 to Arg-240 carry the KLKR motif. The segment covering Ser-248–Ser-259 has biased composition (low complexity). Ser-252 and Ser-265 each carry phosphoserine. Residues Gly-271 to Ala-288 are EVH2 block B. Positions Glu-305–Glu-326 are enriched in polar residues. Phosphoserine occurs at positions 310, 312, 335, 337, 347, 355, 360, and 375. A compositionally biased stretch (basic and acidic residues) spans Ala-327–Ser-337. Positions Arg-348–Ser-368 are required for interaction with ZDHHC17. Residues Asp-385–Ile-419 form an EVH2 block C region. A coiled-coil region spans residues Arg-388 to Gln-414.

Belongs to the Ena/VASP family. As to quaternary structure, homotetramer. Binds to the SH3 domains of ABL1, LYN and SRC. Also binds to profilin, with preference for isoform IIa of PFN2, and the WW domain of APBB1/FE65. Binds to SEMA6A. Interacts, via the Pro-rich region, with the C-terminal SH3 domain of DNMBP. Interacts with RAPH1. Binds, via the EVH1 domain, the Pro-rich domain of Listeria monocytogenes actA. Binds, via the EVH1 domain, the Pro-rich domain of ZYX. Interacts with FYB1. Interacts with ZDHHC17. In terms of processing, phosphorylated by PKA; phosphorylation abolishes binding to SH3 domains of ABL and SRC.

The protein resides in the cytoplasm. It is found in the cytoskeleton. Its subcellular location is the stress fiber. The protein localises to the cell projection. It localises to the lamellipodium. Ena/VASP proteins are actin-associated proteins involved in a range of processes dependent on cytoskeleton remodeling and cell polarity such as axon guidance and lamellipodial and filopodial dynamics in migrating cells. EVL enhances actin nucleation and polymerization. The sequence is that of Ena/VASP-like protein (EVL) from Pongo abelii (Sumatran orangutan).